A 313-amino-acid chain; its full sequence is tRNA dimethylallyltransferase (313 aa).

ATP is bound at residue Gly9–Thr16. Thr11–Thr16 serves as a coordination point for substrate. The interaction with substrate tRNA stretch occupies residues Asp34–Gln37.

It belongs to the IPP transferase family. As to quaternary structure, monomer. Mg(2+) is required as a cofactor.

The catalysed reaction is adenosine(37) in tRNA + dimethylallyl diphosphate = N(6)-dimethylallyladenosine(37) in tRNA + diphosphate. In terms of biological role, catalyzes the transfer of a dimethylallyl group onto the adenine at position 37 in tRNAs that read codons beginning with uridine, leading to the formation of N6-(dimethylallyl)adenosine (i(6)A). This chain is tRNA dimethylallyltransferase, found in Lachnoclostridium phytofermentans (strain ATCC 700394 / DSM 18823 / ISDg) (Clostridium phytofermentans).